The sequence spans 434 residues: Adenylosuccinate synthetase (434 aa).

GTP-binding positions include 15–21 (GDEGKGK) and 43–45 (GHT). Asp16 (proton acceptor) is an active-site residue. Mg(2+)-binding residues include Asp16 and Gly43. IMP contacts are provided by residues 16–19 (DEGK), 41–44 (NAGH), Thr133, Arg147, Gln228, Thr243, and Arg307. His44 (proton donor) is an active-site residue. 303 to 309 (SVTGRAR) lines the substrate pocket. GTP contacts are provided by residues Arg309, 335-337 (KLD), and 418-420 (STG).

It belongs to the adenylosuccinate synthetase family. Homodimer. Mg(2+) serves as cofactor.

The protein localises to the cytoplasm. It carries out the reaction IMP + L-aspartate + GTP = N(6)-(1,2-dicarboxyethyl)-AMP + GDP + phosphate + 2 H(+). It participates in purine metabolism; AMP biosynthesis via de novo pathway; AMP from IMP: step 1/2. Functionally, plays an important role in the de novo pathway of purine nucleotide biosynthesis. Catalyzes the first committed step in the biosynthesis of AMP from IMP. This is Adenylosuccinate synthetase from Neisseria meningitidis serogroup C / serotype 2a (strain ATCC 700532 / DSM 15464 / FAM18).